A 120-amino-acid chain; its full sequence is Large ribosomal subunit protein uL14 (120 aa).

This sequence belongs to the universal ribosomal protein uL14 family. Part of the 50S ribosomal subunit. Forms a cluster with proteins L3 and L19. In the 70S ribosome, L14 and L19 interact and together make contacts with the 16S rRNA in bridges B5 and B8.

Functionally, binds to 23S rRNA. Forms part of two intersubunit bridges in the 70S ribosome. The sequence is that of Large ribosomal subunit protein uL14 from Phytoplasma australiense.